Here is a 107-residue protein sequence, read N- to C-terminus: Pathogenesis-related protein PR-4 (107 aa).

The region spanning 1–107 (QNINWDLRTA…VNYDFVDCGD (107 aa)) is the Barwin domain. Cystine bridges form between cysteine 14/cysteine 46, cysteine 35/cysteine 69, and cysteine 49/cysteine 105.

As to expression, preferentially expressed in the tissue surrounding the abscission zone of fruitlets.

The protein localises to the secreted. Its subcellular location is the cell wall. Its function is as follows. May be involved in protecting plant tissues from pathogen infection. This is Pathogenesis-related protein PR-4 from Prunus persica (Peach).